Here is a 385-residue protein sequence, read N- to C-terminus: Cytochrome b (385 aa).

Helical transmembrane passes span 32–52, 76–98, 113–133, and 179–199; these read FGALAAFCLGIQIVTGIFLAM, WLIRYIHANGASFFFICVYIHVF, LWNLGVTILIVMILTAFLGYV, and FFSLHYLLPFVIALLSLIHVA. Residues His-82 and His-96 each contribute to the heme b site. His-183 and His-197 together coordinate heme b. An a ubiquinone-binding site is contributed by His-202. The next 4 helical transmembrane spans lie at 226–246, 290–310, 322–342, and 349–369; these read FIFKDLLGIIFFLIVFCYAVF, LGGVITLGLALIVLFLLPFIT, SKTILFWSFFSVCVLLGWIGF, and YLMLGQMLTVLYFFYFFSLAV.

Belongs to the cytochrome b family. In terms of assembly, the main subunits of complex b-c1 are: cytochrome b, cytochrome c1 and the Rieske protein. The cofactor is heme b.

The protein resides in the mitochondrion inner membrane. Its function is as follows. Component of the ubiquinol-cytochrome c reductase complex (complex III or cytochrome b-c1 complex) that is part of the mitochondrial respiratory chain. The b-c1 complex mediates electron transfer from ubiquinol to cytochrome c. Contributes to the generation of a proton gradient across the mitochondrial membrane that is then used for ATP synthesis. This is Cytochrome b (MT-CYB) from Acanthamoeba castellanii (Amoeba).